The sequence spans 118 residues: UPF0342 protein BCG9842_B4422 (118 aa).

The protein belongs to the UPF0342 family.

This chain is UPF0342 protein BCG9842_B4422, found in Bacillus cereus (strain G9842).